The primary structure comprises 137 residues: NADH-quinone oxidoreductase subunit A (137 aa).

3 consecutive transmembrane segments (helical) span residues 12 to 32, 66 to 86, and 96 to 116; these read WGFA…LGVS, FYLV…LFAW, and TGFV…VYLF.

The protein belongs to the complex I subunit 3 family. In terms of assembly, NDH-1 is composed of 13 different subunits. Subunits NuoA, H, J, K, L, M, N constitute the membrane sector of the complex.

The protein localises to the cell inner membrane. The enzyme catalyses a quinone + NADH + 5 H(+)(in) = a quinol + NAD(+) + 4 H(+)(out). Functionally, NDH-1 shuttles electrons from NADH, via FMN and iron-sulfur (Fe-S) centers, to quinones in the respiratory chain. The immediate electron acceptor for the enzyme in this species is believed to be ubiquinone. Couples the redox reaction to proton translocation (for every two electrons transferred, four hydrogen ions are translocated across the cytoplasmic membrane), and thus conserves the redox energy in a proton gradient. The protein is NADH-quinone oxidoreductase subunit A of Pseudomonas fluorescens (strain Pf0-1).